The following is a 241-amino-acid chain: Phosphoglycolate phosphatase (241 aa).

Asp-8 (nucleophile) is an active-site residue. Positions 8, 10, and 174 each coordinate Mg(2+).

The protein belongs to the HAD-like hydrolase superfamily. CbbY/CbbZ/Gph/YieH family. It depends on Mg(2+) as a cofactor.

It catalyses the reaction 2-phosphoglycolate + H2O = glycolate + phosphate. It participates in organic acid metabolism; glycolate biosynthesis; glycolate from 2-phosphoglycolate: step 1/1. Its function is as follows. Specifically catalyzes the dephosphorylation of 2-phosphoglycolate. Is involved in the dissimilation of the intracellular 2-phosphoglycolate formed during the DNA repair of 3'-phosphoglycolate ends, a major class of DNA lesions induced by oxidative stress. This is Phosphoglycolate phosphatase from Rhodospirillum rubrum (strain ATCC 11170 / ATH 1.1.1 / DSM 467 / LMG 4362 / NCIMB 8255 / S1).